A 973-amino-acid polypeptide reads, in one-letter code: UvrABC system protein A (973 aa).

34-41 is a binding site for ATP; the sequence is GLSGSGKS. ABC transporter domains are found at residues 331-609 and 629-958; these read WAKS…PKSL and PKKK…QFLK. 662-669 contributes to the ATP binding site; the sequence is GVSGGGKS. The C4-type zinc-finger motif lies at 761-787; it reads CEACQGDGVIKIEMHFLPDVYVTCDVC.

Belongs to the ABC transporter superfamily. UvrA family. In terms of assembly, forms a heterotetramer with UvrB during the search for lesions.

It is found in the cytoplasm. The UvrABC repair system catalyzes the recognition and processing of DNA lesions. UvrA is an ATPase and a DNA-binding protein. A damage recognition complex composed of 2 UvrA and 2 UvrB subunits scans DNA for abnormalities. When the presence of a lesion has been verified by UvrB, the UvrA molecules dissociate. This chain is UvrABC system protein A, found in Rhizobium meliloti (strain 1021) (Ensifer meliloti).